Consider the following 329-residue polypeptide: GTPase Obg (329 aa).

In terms of domain architecture, Obg spans 1-159; sequence MQFIDQARIT…WPLQLELKLL (159 aa). Positions 160–328 constitute an OBG-type G domain; the sequence is AEVGIIGLPN…LLAETWVELG (169 aa). ATP is bound by residues 166–173, 191–195, 213–216, 280–283, and 309–311; these read GLPNAGKS, FTTLV, DIPG, NKQE, and SAA. Positions 173 and 193 each coordinate Mg(2+).

This sequence belongs to the TRAFAC class OBG-HflX-like GTPase superfamily. OBG GTPase family. In terms of assembly, monomer. It depends on Mg(2+) as a cofactor.

It is found in the cytoplasm. An essential GTPase which binds GTP, GDP and possibly (p)ppGpp with moderate affinity, with high nucleotide exchange rates and a fairly low GTP hydrolysis rate. Plays a role in control of the cell cycle, stress response, ribosome biogenesis and in those bacteria that undergo differentiation, in morphogenesis control. This Synechococcus sp. (strain CC9605) protein is GTPase Obg.